We begin with the raw amino-acid sequence, 492 residues long: Phytoene desaturase (lycopene-forming) (492 aa).

V5 to G38 lines the FAD pocket.

This sequence belongs to the carotenoid/retinoid oxidoreductase family. FAD serves as cofactor.

It carries out the reaction 15-cis-phytoene + 4 A = all-trans-lycopene + 4 AH2. It participates in carotenoid biosynthesis; lycopene biosynthesis. This enzyme converts phytoene into lycopene via the intermediaries of phytofluene, zeta-carotene and neurosporene by the introduction of four double bonds. The polypeptide is Phytoene desaturase (lycopene-forming) (crtI) (Pseudescherichia vulneris (Escherichia vulneris)).